A 246-amino-acid chain; its full sequence is 3'(2'),5'-bisphosphate nucleotidase CysQ (246 aa).

Residues Glu-64, Asp-83, Leu-85, Asp-86, and Asp-205 each coordinate Mg(2+). Glu-64 provides a ligand contact to substrate. Residues 85–88 (LDGT) and Asp-205 contribute to the substrate site.

Belongs to the inositol monophosphatase superfamily. CysQ family. It depends on Mg(2+) as a cofactor.

Its subcellular location is the cell inner membrane. The enzyme catalyses adenosine 3',5'-bisphosphate + H2O = AMP + phosphate. Converts adenosine-3',5'-bisphosphate (PAP) to AMP. This chain is 3'(2'),5'-bisphosphate nucleotidase CysQ, found in Escherichia coli O157:H7.